We begin with the raw amino-acid sequence, 208 residues long: High frequency lysogenization protein HflD homolog (208 aa).

The protein belongs to the HflD family.

The protein resides in the cytoplasm. It localises to the cell inner membrane. This Edwardsiella ictaluri (strain 93-146) protein is High frequency lysogenization protein HflD homolog.